The primary structure comprises 946 residues: Inhibin beta chain (946 aa).

Disordered stretches follow at residues 115-142 (VADR…SSTS) and 174-194 (KSRN…RRRR). The span at 128-142 (VSVPTTPNETPSSTS) shows a compositional bias: low complexity. N-linked (GlcNAc...) asparagine glycans are attached at residues Asn208, Asn217, Asn271, and Asn389. The tract at residues 436-462 (SPGSHLFNGRGGRTDQRSERDPSHHKY) is disordered. Over residues 447–459 (GRTDQRSERDPSH) the composition is skewed to basic and acidic residues. Asn471, Asn484, Asn542, Asn561, Asn566, Asn732, and Asn804 each carry an N-linked (GlcNAc...) asparagine glycan. 4 cysteine pairs are disulfide-bonded: Cys837–Cys846, Cys845–Cys912, Cys874–Cys943, and Cys878–Cys945.

It belongs to the TGF-beta family. As to quaternary structure, homodimer or heterodimer; disulfide-linked. In terms of processing, cleaved in vitro by metalloproteases tok and tld to produce a 30 kDa product. In terms of tissue distribution, widely expressed in larval brains.

The protein resides in the secreted. Controls several aspects of neuronal morphogenesis; essential for optic lobe development, EcR-B1 expression in larval brains, mushroom body remodeling, dorsal neuron morphogenesis and motoneuron axon guidance. Ligands Actbeta and daw act redundantly through the Activin receptor Babo and its transcriptional mediator Smad2 (Smox), to regulate neuroblast numbers and proliferation rates in the developing larval brain. This is Inhibin beta chain (Actbeta) from Drosophila melanogaster (Fruit fly).